A 963-amino-acid polypeptide reads, in one-letter code: MPLNLPLSALEQHDEFIGRHIGPCSTEMATMLTAIGADSLEQLIDQTVPAAIRLPADLPLPAPRREHEALADLKAMASKNVVNKSCIGMGYYDTLTPKVILRNVMENPGWYTAYTPYQAEIAQGRLEALMNFQQMVIDLTGLEIANASLLDEATAAAEAMTMARRVSKSKSNRFLVDANCFPQSIDVVKTRAAYFGFELVIGNIDAHKDGDFFGALLQYPGDNGEVRDLTDVIAGLKAKGTTVAVASDLMALVLLKSPGAMGADIALGSSQRFGIPMGFGGPHAAFFATREAFVRSMPGRIIGISKDARGNTAYRMALQTREQHIRREKANSNICTSQVLLANMAGMYVVYHGAEGLRTIAGRIHRLTAILAEGLKRASVNLLTKQFYDTVHFDLGARAESVYNDALAAGYNLRRVSAGVLGISFDETTTRDDVATLFKLIAQTTLDVATIDAQVAAADSALPDSLIRSDAVLQHPVFNTHHTEHEMLRYLKSLQNKDLALDHSMISLGSCTMKLNATSEMIPVTWPEFGGIHPFAPRDQAVGYLEMITSLTEWLKTVTGFDAICMQPNSGAQGEYAGLVAIDRFHASRGEEHRNVCLIPKSAHGTNPATAQMANMKVVVVDCDENGNVDVADLKAKAEEHKDDLACLMITYPSTHGVFEEAIRDICAIVHANGGQVYMDGANLNAQVGLTSPGFIGADVSHMNLHKTFAIPHGGGGPGMGPIGLKAHLAPFMADHVVQPTGDANRVNAGQGAVSAAPFGSASILTISWMYLAMLGGAGVKKATQVAILNANYVAKQLNAHYPVLYVGKNGRVAHECILDIRPIKAATGIAEIDIAKRLMDYGFHAPTVSFPVAGTIMVEPTESESKAELDRFIGAMIAIREEIRQIENGVWTADNNPLKNAPHSQADVMDAEWKHPYSRQQAVFPLPWVAANKFWPSVNRIDDVYGDRNLNCACPPMEAYAD.

At Lys-707 the chain carries N6-(pyridoxal phosphate)lysine.

It belongs to the GcvP family. As to quaternary structure, the glycine cleavage system is composed of four proteins: P, T, L and H. Requires pyridoxal 5'-phosphate as cofactor.

The enzyme catalyses N(6)-[(R)-lipoyl]-L-lysyl-[glycine-cleavage complex H protein] + glycine + H(+) = N(6)-[(R)-S(8)-aminomethyldihydrolipoyl]-L-lysyl-[glycine-cleavage complex H protein] + CO2. Its function is as follows. The glycine cleavage system catalyzes the degradation of glycine. The P protein binds the alpha-amino group of glycine through its pyridoxal phosphate cofactor; CO(2) is released and the remaining methylamine moiety is then transferred to the lipoamide cofactor of the H protein. This chain is Glycine dehydrogenase (decarboxylating), found in Dechloromonas aromatica (strain RCB).